Here is a 1552-residue protein sequence, read N- to C-terminus: ABC multidrug transporter lscH (1552 aa).

2 helical membrane-spanning segments follow: residues 32–52 and 68–88; these read ETILSILPSVLVIVVAPIPII and WFKKISSICFITLSAALVGLW. Asparagine 91 is a glycosylation site (N-linked (GlcNAc...) asparagine). Helical transmembrane passes span 100 to 120, 158 to 178, 280 to 300, 311 to 331, 413 to 433, 457 to 477, 500 to 520, and 528 to 548; these read STPSAVLTFVLSLVYVLLSTI, HSAIPPVFASSLALRVVMLLL, LFQIGFTYAQPFLITAAIELA, NGYGLIGAYILVYSGIAVSVG, AACVMSVGFAIVVMVGTVFLA, ALASIKWLKISGLTDVAFSVI, ILSICTPILGPLLTFAVFAGI, and LTIAKVFTAFSIIVLLNSPLA. The ABC transmembrane type-1 1 domain maps to 280-559; sequence LFQIGFTYAQ…IVQALPQISG (280 aa). The tract at residues 573 to 655 is disordered; the sequence is AEERHDPRST…PDANGDSRDA (83 aa). Polar residues predominate over residues 581 to 602; sequence STTTGTSPESNNGSQQTLSDKQ. Asparagine 592 is a glycosylation site (N-linked (GlcNAc...) asparagine). Positions 639–884 constitute an ABC transporter 1 domain; sequence GHLADTTPDA…AELGWADRDL (246 aa). 676–683 contributes to the ATP binding site; sequence GPVGCGKS. Asparagine 719 and asparagine 834 each carry an N-linked (GlcNAc...) asparagine glycan. Positions 887–912 are enriched in basic and acidic residues; it reads QQEKPGKDELNHEHGEYSESAPEKLR. A disordered region spans residues 887–917; it reads QQEKPGKDELNHEHGEYSESAPEKLRRSQTN. Transmembrane regions (helical) follow at residues 957–977 and 1005–1025; these read GWLTITIFVIAICVYAFCDSF and AVLGVGAVAACLIGTWQLFII. One can recognise an ABC transmembrane type-1 2 domain in the interval 963 to 1241; it reads IFVIAICVYA…ATITSWVTLE (279 aa). Residue asparagine 1028 is glycosylated (N-linked (GlcNAc...) asparagine). Transmembrane regions (helical) follow at residues 1076-1096, 1100-1120, 1184-1204, and 1210-1230; these read AALGVVMALSFGIAQFILVCV, YMAALLPFLLAVLYAIQHFYL, WITFAVNMVIMMLAVILIVLT, and AIGPGYVGIALSNILAFSATM. Positions 1295–1538 constitute an ABC transporter 2 domain; the sequence is IELDNVTASY…PTSIFKELYL (244 aa). Residues asparagine 1299 and asparagine 1313 are each glycosylated (N-linked (GlcNAc...) asparagine). Position 1328 to 1335 (1328 to 1335) interacts with ATP; sequence GRTGSGKS.

It belongs to the ABC transporter superfamily. ABCC family. Conjugate transporter (TC 3.A.1.208) subfamily.

It is found in the cell membrane. In terms of biological role, ABC multidrug transporter; part of the gene cluster that mediates the biosynthesis of the lipopeptide antibiotics leucinostatins that show extensive biological activities, including antimalarial, antiviral, antibacterial, antifungal, and antitumor activities, as well as phytotoxic. May be involved in the efflux of leucinostatins. The polypeptide is ABC multidrug transporter lscH (Purpureocillium lilacinum (Paecilomyces lilacinus)).